A 552-amino-acid polypeptide reads, in one-letter code: CTP synthase (552 aa).

Positions 1 to 270 (MTKYVFVTGG…DRIICEELKL (270 aa)) are amidoligase domain. Serine 13 contacts CTP. Serine 13 lines the UTP pocket. ATP-binding positions include 14–19 (SLGKGI) and aspartate 71. Residues aspartate 71 and glutamate 144 each coordinate Mg(2+). Residues 151–153 (DIE), 191–196 (KTKPTQ), and lysine 227 contribute to the CTP site. Residues 191-196 (KTKPTQ) and lysine 227 each bind UTP. The Glutamine amidotransferase type-1 domain maps to 295–547 (TIGMVGKYVD…VEAAFANKQA (253 aa)). Glycine 356 is a binding site for L-glutamine. Residue cysteine 383 is the Nucleophile; for glutamine hydrolysis of the active site. L-glutamine is bound by residues 384-387 (LGMQ), glutamate 407, and arginine 473. Residues histidine 520 and glutamate 522 contribute to the active site.

Belongs to the CTP synthase family. As to quaternary structure, homotetramer.

It carries out the reaction UTP + L-glutamine + ATP + H2O = CTP + L-glutamate + ADP + phosphate + 2 H(+). The catalysed reaction is L-glutamine + H2O = L-glutamate + NH4(+). The enzyme catalyses UTP + NH4(+) + ATP = CTP + ADP + phosphate + 2 H(+). Its pathway is pyrimidine metabolism; CTP biosynthesis via de novo pathway; CTP from UDP: step 2/2. Its activity is regulated as follows. Allosterically activated by GTP, when glutamine is the substrate; GTP has no effect on the reaction when ammonia is the substrate. The allosteric effector GTP functions by stabilizing the protein conformation that binds the tetrahedral intermediate(s) formed during glutamine hydrolysis. Inhibited by the product CTP, via allosteric rather than competitive inhibition. Functionally, catalyzes the ATP-dependent amination of UTP to CTP with either L-glutamine or ammonia as the source of nitrogen. Regulates intracellular CTP levels through interactions with the four ribonucleotide triphosphates. This chain is CTP synthase, found in Burkholderia ambifaria (strain ATCC BAA-244 / DSM 16087 / CCUG 44356 / LMG 19182 / AMMD) (Burkholderia cepacia (strain AMMD)).